We begin with the raw amino-acid sequence, 371 residues long: GDP-mannose transporter (371 aa).

The Cytoplasmic segment spans residues 1–51 (MGVISFYLIGQLLYLIRKKYTTTYRQQQQHQYNMDSKHSTSSSSSGSLATR). Residues 52–72 (ISNSGPISIAAYCLSSILMTV) form a helical membrane-spanning segment. Residues 73–80 (TNKYVLSG) lie on the Lumenal side of the membrane. The chain crosses the membrane as a helical span at residues 81–101 (FSFNLNFFLLAVQSIVCIVTI). The Cytoplasmic segment spans residues 102–121 (GSLKSLNIITYRQFNKDEAK). A helical membrane pass occupies residues 122-138 (KWSPIAFLLVAMIYTSS). Residues 139 to 145 (KALQYLS) lie on the Lumenal side of the membrane. The chain crosses the membrane as a helical span at residues 146 to 162 (IPVYTIFKNLTIILIAY). The Cytoplasmic segment spans residues 163-171 (GEVIWFGGK). Residues 172-192 (VTTMALSSFLLMVLSSVIAYY) traverse the membrane as a helical segment. At 193–206 (GDNAAVKSHDDAFA) the chain is on the lumenal side. A helical membrane pass occupies residues 207–227 (LYLGYFWMLTNCFASAAFVLI). Topologically, residues 228–241 (MRKRIKLTNFKDFD) are cytoplasmic. The helical transmembrane segment at 242-262 (TMYYNNLLSIPILLICSFIFE) threads the bilayer. At 263–281 (DWSSANVSLNFPADNRVTT) the chain is on the lumenal side. A glycan (N-linked (GlcNAc...) asparagine) is linked at N268. Residues 282–302 (ITAMILSGASSVGISYCSAWC) form a helical membrane-spanning segment. Residues 303-309 (VRVTSST) are Cytoplasmic-facing. Residues 310–329 (TYSMVGALNKLPIALSGLIF) form a helical membrane-spanning segment. The Lumenal portion of the chain corresponds to 330–332 (FEA). The chain crosses the membrane as a helical span at residues 333–355 (AVNFWSVSSIFVGFGAGLVYAVA). Residues 356–371 (KQKQQKEQSQQLPTTK) are Cytoplasmic-facing.

Belongs to the TPT transporter family. SLC35D subfamily. In terms of assembly, homooligomer.

It localises to the golgi apparatus membrane. The protein localises to the cytoplasmic vesicle membrane. It is found in the endoplasmic reticulum membrane. In terms of biological role, involved in the import of GDP-mannose from the cytoplasm into the Golgi lumen. Involved in hyphal formation. In Candida albicans (strain SC5314 / ATCC MYA-2876) (Yeast), this protein is GDP-mannose transporter (VRG4).